Consider the following 486-residue polypeptide: GTPase Obg (486 aa).

Positions 2-159 (SRFIDRVVLH…RELVLELKSV (158 aa)) constitute an Obg domain. In terms of domain architecture, OBG-type G spans 160–340 (ADVGLVGFPS…LTFALAKLVA (181 aa)). GTP contacts are provided by residues 166 to 173 (GFPSAGKS), 191 to 195 (FTTLV), 212 to 215 (DVPG), 292 to 295 (NKAD), and 321 to 323 (SAV). Residues S173 and T193 each coordinate Mg(2+). In terms of domain architecture, OCT spans 358-438 (PVISNENSFS…IGNVSFDWEP (81 aa)). A disordered region spans residues 462–486 (RIGATERKHASRIRRGLEGLDPEDQ).

It belongs to the TRAFAC class OBG-HflX-like GTPase superfamily. OBG GTPase family. In terms of assembly, monomer. Requires Mg(2+) as cofactor.

Its subcellular location is the cytoplasm. Its function is as follows. An essential GTPase which binds GTP, GDP and possibly (p)ppGpp with moderate affinity, with high nucleotide exchange rates and a fairly low GTP hydrolysis rate. Plays a role in control of the cell cycle, stress response, ribosome biogenesis and in those bacteria that undergo differentiation, in morphogenesis control. The chain is GTPase Obg from Rhodococcus jostii (strain RHA1).